Here is a 92-residue protein sequence, read N- to C-terminus: Small ribosomal subunit protein uS19 (92 aa).

It belongs to the universal ribosomal protein uS19 family.

Functionally, protein S19 forms a complex with S13 that binds strongly to the 16S ribosomal RNA. The protein is Small ribosomal subunit protein uS19 of Borreliella afzelii (strain PKo) (Borrelia afzelii).